Consider the following 348-residue polypeptide: Tetraacyldisaccharide 4'-kinase (348 aa).

Residue 54–61 (TVGGAGKT) participates in ATP binding.

Belongs to the LpxK family.

It catalyses the reaction a lipid A disaccharide + ATP = a lipid IVA + ADP + H(+). Its pathway is glycolipid biosynthesis; lipid IV(A) biosynthesis; lipid IV(A) from (3R)-3-hydroxytetradecanoyl-[acyl-carrier-protein] and UDP-N-acetyl-alpha-D-glucosamine: step 6/6. In terms of biological role, transfers the gamma-phosphate of ATP to the 4'-position of a tetraacyldisaccharide 1-phosphate intermediate (termed DS-1-P) to form tetraacyldisaccharide 1,4'-bis-phosphate (lipid IVA). In Agrobacterium fabrum (strain C58 / ATCC 33970) (Agrobacterium tumefaciens (strain C58)), this protein is Tetraacyldisaccharide 4'-kinase.